We begin with the raw amino-acid sequence, 306 residues long: Porphobilinogen deaminase (306 aa).

Position 239 is an S-(dipyrrolylmethanemethyl)cysteine (Cys-239).

It belongs to the HMBS family. As to quaternary structure, monomer. Dipyrromethane is required as a cofactor.

It carries out the reaction 4 porphobilinogen + H2O = hydroxymethylbilane + 4 NH4(+). Its pathway is porphyrin-containing compound metabolism; protoporphyrin-IX biosynthesis; coproporphyrinogen-III from 5-aminolevulinate: step 2/4. In terms of biological role, tetrapolymerization of the monopyrrole PBG into the hydroxymethylbilane pre-uroporphyrinogen in several discrete steps. The chain is Porphobilinogen deaminase from Helicobacter pylori (strain Shi470).